Here is a 227-residue protein sequence, read N- to C-terminus: Cytochrome c oxidase subunit 2 (227 aa).

Over 1-14 (MAYPLQLGLQDATS) the chain is Mitochondrial intermembrane. The chain crosses the membrane as a helical span at residues 15 to 45 (PIMEELMNFHDHTLMIVFLISSLVLYVISSM). Residues 46–59 (LTTKLTHTSTMDAQ) are Mitochondrial matrix-facing. Residues 60-87 (EVETIWTILPAVILIMIALPSLRILYMM) form a helical membrane-spanning segment. Residues 88-227 (DEINNPVLTV…NFETWSVSMI (140 aa)) lie on the Mitochondrial intermembrane side of the membrane. Cu cation-binding residues include histidine 161, cysteine 196, glutamate 198, cysteine 200, histidine 204, and methionine 207. Glutamate 198 contacts Mg(2+).

This sequence belongs to the cytochrome c oxidase subunit 2 family. As to quaternary structure, component of the cytochrome c oxidase (complex IV, CIV), a multisubunit enzyme composed of 14 subunits. The complex is composed of a catalytic core of 3 subunits MT-CO1, MT-CO2 and MT-CO3, encoded in the mitochondrial DNA, and 11 supernumerary subunits COX4I, COX5A, COX5B, COX6A, COX6B, COX6C, COX7A, COX7B, COX7C, COX8 and NDUFA4, which are encoded in the nuclear genome. The complex exists as a monomer or a dimer and forms supercomplexes (SCs) in the inner mitochondrial membrane with NADH-ubiquinone oxidoreductase (complex I, CI) and ubiquinol-cytochrome c oxidoreductase (cytochrome b-c1 complex, complex III, CIII), resulting in different assemblies (supercomplex SCI(1)III(2)IV(1) and megacomplex MCI(2)III(2)IV(2)). Found in a complex with TMEM177, COA6, COX18, COX20, SCO1 and SCO2. Interacts with TMEM177 in a COX20-dependent manner. Interacts with COX20. Interacts with COX16. Requires Cu cation as cofactor.

It localises to the mitochondrion inner membrane. It catalyses the reaction 4 Fe(II)-[cytochrome c] + O2 + 8 H(+)(in) = 4 Fe(III)-[cytochrome c] + 2 H2O + 4 H(+)(out). Its function is as follows. Component of the cytochrome c oxidase, the last enzyme in the mitochondrial electron transport chain which drives oxidative phosphorylation. The respiratory chain contains 3 multisubunit complexes succinate dehydrogenase (complex II, CII), ubiquinol-cytochrome c oxidoreductase (cytochrome b-c1 complex, complex III, CIII) and cytochrome c oxidase (complex IV, CIV), that cooperate to transfer electrons derived from NADH and succinate to molecular oxygen, creating an electrochemical gradient over the inner membrane that drives transmembrane transport and the ATP synthase. Cytochrome c oxidase is the component of the respiratory chain that catalyzes the reduction of oxygen to water. Electrons originating from reduced cytochrome c in the intermembrane space (IMS) are transferred via the dinuclear copper A center (CU(A)) of subunit 2 and heme A of subunit 1 to the active site in subunit 1, a binuclear center (BNC) formed by heme A3 and copper B (CU(B)). The BNC reduces molecular oxygen to 2 water molecules using 4 electrons from cytochrome c in the IMS and 4 protons from the mitochondrial matrix. The polypeptide is Cytochrome c oxidase subunit 2 (MT-CO2) (Malacothrix typica (Long-eared mouse)).